We begin with the raw amino-acid sequence, 438 residues long: ATP-dependent RNA helicase SUB2 (438 aa).

Residues 1–19 (MSHEGEEDLLEYSDNEQEI) show a composition bias toward acidic residues. Residues 1-44 (MSHEGEEDLLEYSDNEQEIQVDNTKATEVAGNGEEAADGKDGDK) are disordered. Positions 54–82 (TGFKDFLLKPELSRAIIDCGFEHPSEVQQ) match the Q motif motif. A Helicase ATP-binding domain is found at 85-260 (IPQSIHGTDV…RRFLQNPLEI (176 aa)). 98–105 (AKSGLGKT) is a binding site for ATP. Residues 207–210 (DECD) carry the DECD box motif. In terms of domain architecture, Helicase C-terminal spans 272–433 (GLQQYYIRLE…EFPEEGVDPS (162 aa)).

This sequence belongs to the DEAD box helicase family. DECD subfamily.

The protein localises to the nucleus. It carries out the reaction ATP + H2O = ADP + phosphate + H(+). ATP-binding RNA helicase involved in transcription elongation and required for the export of mRNA out of the nucleus. SUB2 also plays a role in pre-mRNA splicing and spliceosome assembly. May be involved in rDNA and telomeric silencing, and maintenance of genome integrity. In Eremothecium gossypii (strain ATCC 10895 / CBS 109.51 / FGSC 9923 / NRRL Y-1056) (Yeast), this protein is ATP-dependent RNA helicase SUB2 (SUB2).